Reading from the N-terminus, the 2523-residue chain is uncharacterized protein (2523 aa).

The protein belongs to the mycobacterial PPE family.

In terms of biological role, probably plays a role in host phagosome maturation arrest. This is an uncharacterized protein from Mycobacterium tuberculosis (strain ATCC 25618 / H37Rv).